Consider the following 590-residue polypeptide: Transcription factor GTE7 (590 aa).

Residues leucine 125–proline 160 are disordered. One can recognise a Bromo domain in the interval lysine 164–alanine 270. Disordered regions lie at residues threonine 282 to asparagine 400 and arginine 476 to cysteine 590. The segment covering proline 288–glutamine 298 has biased composition (basic and acidic residues). Residues proline 347–glutamine 369 show a composition bias toward pro residues. The NET domain maps to proline 394 to lysine 475. Residues serine 498–alanine 508 show a composition bias toward basic and acidic residues. Residues glycine 509–isoleucine 521 are compositionally biased toward acidic residues. Over residues alanine 537 to serine 562 the composition is skewed to low complexity.

It localises to the nucleus. This chain is Transcription factor GTE7 (GTE7), found in Arabidopsis thaliana (Mouse-ear cress).